Here is a 54-residue protein sequence, read N- to C-terminus: UPF0235 protein in proC 3'region (54 aa).

It belongs to the UPF0235 family.

This Vibrio alginolyticus protein is UPF0235 protein in proC 3'region.